The chain runs to 349 residues: N-acetyltaurine hydrolase (349 aa).

Positions 26, 28, 169, 201, 230, and 298 each coordinate a divalent metal cation.

It belongs to the metallo-dependent hydrolases superfamily. Phosphotriesterase family. A divalent metal cation is required as a cofactor. Expressed in the kidney, liver and brainstem.

It localises to the cytoplasm. The protein localises to the cytosol. It carries out the reaction N-acetyltaurine + H2O = taurine + acetate. The enzyme catalyses N-propanoyltaurine + H2O = propanoate + taurine. The catalysed reaction is N-acetyl-L-methionine + H2O = L-methionine + acetate. It catalyses the reaction N-acetyl-L-isoleucine + H2O = L-isoleucine + acetate. It carries out the reaction N-acetyl-L-leucine + H2O = L-leucine + acetate. The enzyme catalyses N-acetyl-L-valine + H2O = L-valine + acetate. In terms of biological role, N-acetyltaurine hydrolase that regulates feeding by catalyzing the hydrolysis of N-acetyltaurine into taurine and acetate. N-acetyltaurine has anorexigenic and anti-obesity effects that are dependent on GFRAL receptor and GDF15. PTER also acts on other N-acetyl amino acids (Met, Ile, Leu, Val) and N-propionyltaurine, but at lower rates. The sequence is that of N-acetyltaurine hydrolase from Mus musculus (Mouse).